Here is a 102-residue protein sequence, read N- to C-terminus: Small ribosomal subunit protein uS10 (102 aa).

The protein belongs to the universal ribosomal protein uS10 family. Part of the 30S ribosomal subunit.

Involved in the binding of tRNA to the ribosomes. The polypeptide is Small ribosomal subunit protein uS10 (Syntrophotalea carbinolica (strain DSM 2380 / NBRC 103641 / GraBd1) (Pelobacter carbinolicus)).